The chain runs to 802 residues: Vacuolar membrane protease (802 aa).

The Cytoplasmic portion of the chain corresponds to 1–13; that stretch reads MARYNPLAFTSGP. The chain crosses the membrane as a helical span at residues 14 to 34; that stretch reads VVFFITITYTALLIALLLTHL. The Vacuolar segment spans residues 35-357; the sequence is TLPSYPSHPP…KVFIVFQLHT (323 aa). Asn48, Asn102, Asn105, and Asn112 each carry an N-linked (GlcNAc...) asparagine glycan. His152 and Asp164 together coordinate Zn(2+). Glu198 serves as the catalytic Proton acceptor. The Zn(2+) site is built by Glu199, Glu224, and His297. A helical membrane pass occupies residues 358-378; sequence FFALCVTLLVVAPLTLIGLAW. The Cytoplasmic portion of the chain corresponds to 379 to 389; the sequence is SLHKADRNYLF. The chain crosses the membrane as a helical span at residues 390–409; that stretch reads ARKAFVYSADDDEPIHLYGW. Over 410 to 423 the chain is Vacuolar; that stretch reads RGFFRFPIAFGIAT. Residues 424–444 traverse the membrane as a helical segment; it reads SIVVGLAMMLSAWFAVSWFLL. Over 445 to 457 the chain is Cytoplasmic; it reads HGADAMRPSALQR. A helical membrane pass occupies residues 458-478; sequence MYSLLWLFIGSFCLLVFFTIL. The Vacuolar portion of the chain corresponds to 479–490; that stretch reads ANNHQVAAGYPS. A helical membrane pass occupies residues 491–511; that stretch reads LFCFATVFLANVLSFLELFLA. Over 512–609 the chain is Cytoplasmic; sequence PPKSAYAWNV…EQEWSGKLPS (98 aa). Disordered regions lie at residues 528–554 and 570–603; these read GSRPLTSSATAARSDNRATTDDDATET and AGRRDAINEGANSQEPESRRRLDLGQPHSGEQEW. The chain crosses the membrane as a helical span at residues 610–630; it reads WIWIVQFSLLAPMIVILVGQI. At 631–649 the chain is on the vacuolar side; the sequence is ALLLTSALYQTPSDGNSPL. Residues 650–670 form a helical membrane-spanning segment; the sequence is YIYTSIAALAVFLVAPIGPFI. Residues 671 to 677 lie on the Cytoplasmic side of the membrane; sequence HRFTHHV. The helical transmembrane segment at 678-698 threads the bilayer; sequence PTFLFLLCVATTIYNLVAFPF. Residues 699 to 802 are Vacuolar-facing; the sequence is SEQHKLKVYF…HDDSNNRGRR (104 aa). N-linked (GlcNAc...) asparagine glycans are attached at residues Asn746 and Asn779.

Belongs to the peptidase M28 family. The cofactor is Zn(2+).

The protein localises to the vacuole membrane. In terms of biological role, may be involved in vacuolar sorting and osmoregulation. This is Vacuolar membrane protease from Leptosphaeria maculans (strain JN3 / isolate v23.1.3 / race Av1-4-5-6-7-8) (Blackleg fungus).